Here is a 355-residue protein sequence, read N- to C-terminus: Probable sugar phosphate/phosphate translocator At3g10290 (355 aa).

Residues 19–51 (QKKQPNLSISSTTKMNKKNPDQKSDMSSSSSSP) form a disordered region. Residues 22–32 (QPNLSISSTTK) show a composition bias toward polar residues. 10 consecutive transmembrane segments (helical) span residues 55–75 (TLFI…VLLL), 89–109 (IFLT…SIVF), 124–144 (FLKV…GNIS), 150–170 (VSFN…FAYI), 177–197 (AWVT…ASGG), 198–218 (EPGF…ARAF), 239–259 (LMLY…IFME), 277–297 (YILL…NFLV), 305–325 (TLQV…ILLF), and 328–348 (PVTV…VAYG).

This sequence belongs to the TPT transporter family. TPT (TC 2.A.7.9) subfamily.

It localises to the membrane. The polypeptide is Probable sugar phosphate/phosphate translocator At3g10290 (Arabidopsis thaliana (Mouse-ear cress)).